We begin with the raw amino-acid sequence, 170 residues long: Adenine phosphoribosyltransferase (170 aa).

Belongs to the purine/pyrimidine phosphoribosyltransferase family. Homodimer.

The protein localises to the cytoplasm. The catalysed reaction is AMP + diphosphate = 5-phospho-alpha-D-ribose 1-diphosphate + adenine. It participates in purine metabolism; AMP biosynthesis via salvage pathway; AMP from adenine: step 1/1. In terms of biological role, catalyzes a salvage reaction resulting in the formation of AMP, that is energically less costly than de novo synthesis. The polypeptide is Adenine phosphoribosyltransferase (Halothermothrix orenii (strain H 168 / OCM 544 / DSM 9562)).